Consider the following 251-residue polypeptide: MTDTIRADGRTADQLRPVTIERAWNRKAEGSALVSFGGTRVLCTASFTNGVPRWMSGKGRGWVTAEYAMLPRSTNDRMDRESVKGRIGGRTHEISRLIGRSLRAVVDMKALGENTIVLDCDVLQADGGTRTAAITGAYVALADALEWGREHRFIGQKAAPLLDSVSAVSVGIVDGSPMLDLAYTEDVRAETDMNVVVTGRGLFVEVQGTAEGAPFDRSELNGLLDLALAGTTALVAVQSAALAAPAPGCEG.

Phosphate is bound by residues Arg90 and 128–130; that span reads GTR.

It belongs to the RNase PH family. As to quaternary structure, homohexameric ring arranged as a trimer of dimers.

The enzyme catalyses tRNA(n+1) + phosphate = tRNA(n) + a ribonucleoside 5'-diphosphate. Functionally, phosphorolytic 3'-5' exoribonuclease that plays an important role in tRNA 3'-end maturation. Removes nucleotide residues following the 3'-CCA terminus of tRNAs; can also add nucleotides to the ends of RNA molecules by using nucleoside diphosphates as substrates, but this may not be physiologically important. Probably plays a role in initiation of 16S rRNA degradation (leading to ribosome degradation) during starvation. The chain is Ribonuclease PH from Leifsonia xyli subsp. xyli (strain CTCB07).